The chain runs to 628 residues: EIN3-binding F-box protein 1 (628 aa).

The region spanning 61-109 (PVSIDVLPDECLFEIFRRLSGPQERSACAFVSKQWLTLVSSIRQKEIDV) is the F-box domain.

Part of a SCF (SKP1-cullin-F-box) protein ligase complex. Interacts with CUL1, SKP1A/ASK1, SKP1B/ASK2, ASK11, ASK12, ASK13, ASK18, EIN3, and EIL1. Ubiquitous.

Its subcellular location is the nucleus. Its pathway is protein modification; protein ubiquitination. Component of SCF(EBF1) E3 ubiquitin ligase complexes, which may mediate the ubiquitination and subsequent proteasomal degradation of target proteins (probably including EIN3 and EIL1). Regulator of the ethylene signaling cascade by modulating the stability of EIN3 and EIL1 proteins. Confers insensitivity to ethylene. The polypeptide is EIN3-binding F-box protein 1 (EBF1) (Arabidopsis thaliana (Mouse-ear cress)).